The chain runs to 455 residues: Aminopeptidase YwaD (455 aa).

The first 31 residues, 1–31, serve as a signal peptide directing secretion; sequence MKKLLTVMTMAVLTAGTLLLPAQSVTPAAHA. His-250, Asp-262, Glu-295, Asp-323, and His-401 together coordinate Zn(2+).

The protein belongs to the peptidase M28 family. M28B subfamily. In terms of assembly, monomer. It depends on Zn(2+) as a cofactor.

It localises to the secreted. The catalysed reaction is Release of N-terminal Arg and Lys from oligopeptides when P1' is not Pro. Also acts on arylamides of Arg and Lys.. The enzyme catalyses Release of an N-terminal amino acid, preferentially leucine, but not glutamic or aspartic acids.. In terms of biological role, catalyzes the hydrolysis of a range of N-terminal amino acids. The chain is Aminopeptidase YwaD (ywaD) from Bacillus subtilis (strain 168).